Reading from the N-terminus, the 921-residue chain is Collagen alpha-1(IX) chain (921 aa).

An N-terminal signal peptide occupies residues 1 to 23 (MKNFWKISVFFCVCSCLGPWVSA). The tract at residues 24 to 268 (TLKRRARFPA…ITTSQTTDER (245 aa)) is nonhelical region (NC4). 2 cysteine pairs are disulfide-bonded: C44–C242 and C198–C252. The Laminin G-like domain occupies 50–244 (GQDDLPGFDL…LQWMLIHCDP (195 aa)). 3 residues coordinate Zn(2+): D213, D215, and H253. 2 disordered regions span residues 253-759 (HELP…APTD) and 783-921 (RPDT…GPDK). 8 Collagen-like domains span residues 269–325 (GPPG…PGAD), 326–356 (GLTG…GFPG), 358–403 (GIPG…GTIG), 416–472 (PPGR…GLRG), 473–512 (ITGI…PPGE), 604–656 (GKPG…LPGP), 657–711 (PGLP…PGEP), and 712–755 (GLRG…PPGR). A triple-helical region (COL3) region spans residues 269–405 (GPPGEQGPPG…PGPSGTIGFH (137 aa)). 2 stretches are compositionally biased toward pro residues: residues 273–285 (EQGP…PPGV) and 298–310 (KGPP…PGDP). A compositionally biased stretch (low complexity) spans 368–383 (TTGLPGELGRVGPIGD). Positions 387–398 (RGPPGPPGPPGP) are enriched in pro residues. Positions 406–417 (DGDPLCPNSCPP) are nonhelical region (NC3). The segment at 418-756 (GRSGYPGLPG…PGIQGPPGRA (339 aa)) is triple-helical region (COL2). Over residues 479-489 (DKGEKGARGFD) the composition is skewed to basic and acidic residues. Composition is skewed to low complexity over residues 594–632 (PGKP…PVGP) and 639–650 (PGKLGSVGSPGL). The tract at residues 757–786 (PTDQHIKQVCMRVVQEHFVEMAASLKRPDT) is nonhelical region (NC2). The tract at residues 787-901 (GASGLPGRPG…PGPPGPPGFC (115 aa)) is triple-helical region (COL1). A Collagen-like 9 domain is found at 790–847 (GLPGRPGPPGPPGPPGENGFPGQMGIRGLPGIKGPPGALGLRGPKGDLGEKGERGPPG). Residues 794–804 (RPGPPGPPGPP) are compositionally biased toward pro residues. The span at 833 to 845 (PKGDLGEKGERGP) shows a compositional bias: basic and acidic residues. The segment covering 888-900 (VPGPPGPPGPPGF) has biased composition (pro residues). The tract at residues 902–921 (EPASCTLQSGQRAFSKGPDK) is nonhelical region (NC1).

It belongs to the fibril-associated collagens with interrupted helices (FACIT) family. In terms of assembly, heterotrimer of an alpha 1(IX), an alpha 2(IX) and an alpha 3(IX) chain. Covalently linked to the telopeptides of type II collagen by lysine-derived cross-links. Post-translationally, prolines at the third position of the tripeptide repeating unit (G-X-Y) are hydroxylated in some or all of the chains.

It is found in the secreted. The protein resides in the extracellular space. The protein localises to the extracellular matrix. Functionally, structural component of hyaline cartilage and vitreous of the eye. This Mus musculus (Mouse) protein is Collagen alpha-1(IX) chain (Col9a1).